Reading from the N-terminus, the 629-residue chain is FAST kinase domain-containing protein 4 (629 aa).

An RAP domain is found at 559–617; sequence IAFLRWEFPNFNSRSKDLLGRFVLARRHVLAAGFLVVDVPYYEWLDLKSEWQKTAYLKD.

This sequence belongs to the FAST kinase family.

The protein resides in the mitochondrion matrix. In terms of biological role, plays a role in processing of mitochondrial RNA precursors and in stabilization of a subset of mature mitochondrial RNA species, such as MT-CO1, MT-CO2, MT-CYB, MT-CO3, MT-ND3, MT-ND5 and MT-ATP8/6. May play a role in cell cycle progression. In Rattus norvegicus (Rat), this protein is FAST kinase domain-containing protein 4 (Tbrg4).